Here is a 142-residue protein sequence, read N- to C-terminus: Large ribosomal subunit protein uL13 (142 aa).

The protein belongs to the universal ribosomal protein uL13 family. In terms of assembly, part of the 50S ribosomal subunit.

Functionally, this protein is one of the early assembly proteins of the 50S ribosomal subunit, although it is not seen to bind rRNA by itself. It is important during the early stages of 50S assembly. This chain is Large ribosomal subunit protein uL13, found in Acidithiobacillus ferrooxidans (strain ATCC 23270 / DSM 14882 / CIP 104768 / NCIMB 8455) (Ferrobacillus ferrooxidans (strain ATCC 23270)).